The chain runs to 849 residues: MAP7 domain-containing protein 1 (849 aa).

Disordered regions lie at residues 1-151 (MESG…REER) and 186-210 (EQRLKAEQRRAALEERQRQKLEKNK). Residues 24 to 41 (EPRPSPEGDPSPPPPPTP) are compositionally biased toward pro residues. Thr49 and Thr53 each carry phosphothreonine. Residues Ser72 and Ser95 each carry the phosphoserine modification. Thr99 is subject to Phosphothreonine. Ser115 and Ser118 each carry phosphoserine. Thr120 bears the Phosphothreonine mark. Residues Ser125 and Ser127 each carry the phosphoserine modification. A compositionally biased stretch (basic and acidic residues) spans 132-151 (QDVKKAGERHKLAKERREER). The stretch at 167–223 (EKAKALREKQLQERRRRLEEQRLKAEQRRAALEERQRQKLEKNKERYEAAIQRSVKK) forms a coiled coil. Ser256, Ser275, Ser315, Ser368, and Ser401 each carry phosphoserine. Positions 318–815 (TLPRNGRDQG…GFPAKGTAGD (498 aa)) are disordered. A compositionally biased stretch (basic and acidic residues) spans 407–437 (RRLEATPVQKKEKKDKERENEKEKSALARER). A phosphoserine mark is found at Ser444, Ser448, Ser454, and Ser460. Residues 457-474 (AELSTKSKARPTSPSTTW) show a composition bias toward polar residues. Lys462 is covalently cross-linked (Glycyl lysine isopeptide (Lys-Gly) (interchain with G-Cter in SUMO2)). Phosphoserine occurs at positions 479 and 496. Residues 479–497 (SPCPSPGPGHTLPPKPPSP) show a composition bias toward pro residues. Residues 523–539 (PEDKNHSKSRTAEEKEP) show a composition bias toward basic and acidic residues. Residues 542 to 556 (PASPAPSPVPSPTPA) show a composition bias toward pro residues. A phosphoserine mark is found at Ser544, Ser548, and Ser552. Thr554 carries the phosphothreonine modification. The segment covering 568-582 (PPDTAVPAVPTVPTF) has biased composition (low complexity). Residues 602-724 (TTDREEATRL…QERRKRLEEI (123 aa)) are a coiled coil. A compositionally biased stretch (basic and acidic residues) spans 603–743 (TDREEATRLL…AETKKQDGKE (141 aa)).

It belongs to the MAP7 family.

The protein resides in the cytoplasm. Its subcellular location is the cytoskeleton. It is found in the spindle. It localises to the microtubule organizing center. The protein localises to the centrosome. The protein resides in the midbody. Functionally, microtubule-stabilizing protein involved in the control of cell motility and neurite outgrowth. Facilitate microtubule stabilization through the maintenance of acetylated stable microtubules. The chain is MAP7 domain-containing protein 1 (Map7d1) from Rattus norvegicus (Rat).